A 156-amino-acid polypeptide reads, in one-letter code: ATP synthase subunit b (156 aa).

A helical membrane pass occupies residues 11-31 (AIAFVLFVLFCMKYVWPPLMA).

It belongs to the ATPase B chain family. In terms of assembly, F-type ATPases have 2 components, F(1) - the catalytic core - and F(0) - the membrane proton channel. F(1) has five subunits: alpha(3), beta(3), gamma(1), delta(1), epsilon(1). F(0) has three main subunits: a(1), b(2) and c(10-14). The alpha and beta chains form an alternating ring which encloses part of the gamma chain. F(1) is attached to F(0) by a central stalk formed by the gamma and epsilon chains, while a peripheral stalk is formed by the delta and b chains.

The protein resides in the cell inner membrane. F(1)F(0) ATP synthase produces ATP from ADP in the presence of a proton or sodium gradient. F-type ATPases consist of two structural domains, F(1) containing the extramembraneous catalytic core and F(0) containing the membrane proton channel, linked together by a central stalk and a peripheral stalk. During catalysis, ATP synthesis in the catalytic domain of F(1) is coupled via a rotary mechanism of the central stalk subunits to proton translocation. Functionally, component of the F(0) channel, it forms part of the peripheral stalk, linking F(1) to F(0). The chain is ATP synthase subunit b from Citrobacter koseri (strain ATCC BAA-895 / CDC 4225-83 / SGSC4696).